Reading from the N-terminus, the 594-residue chain is Class I diterpene synthase TPS6, chloroplastic (594 aa).

Residues D330, D334, N474, Q477, and E482 each contribute to the Mg(2+) site. Positions 330–334 match the DDXXD motif motif; sequence DDFFD.

Belongs to the terpene synthase family. Requires Mg(2+) as cofactor. Mostly expressed in trichomes of leaves and fruits.

The protein localises to the plastid. It is found in the chloroplast. The catalysed reaction is peregrinol diphosphate = labd-13(16),14-diene-9-ol + diphosphate. The enzyme catalyses 9alpha-copalyl diphosphate = syn-isopimara-7,15-diene + diphosphate. Its pathway is secondary metabolite biosynthesis; terpenoid biosynthesis. Involved in the biosynthesis of labdane-type diterpenoid including cleroda-dienols, and peregrinol lactones and furan derivatives, dopaminergic diterpenoids that can bind to dopamine receptors in the human pituitary gland, have probably ability to lower prolactin levels, and are used to treat menstrual cycle disorders (e.g. premenstrual syndrome and mastodynia). Terpene synthase the catalyzes the conversion of peregrinol diphosphate to labda-13(16),14-dien-9-ol, and of syn-copalyl diphosophate to dehydroabietadiene and syn-isopimara-7,15-diene. This Vitex agnus-castus (Chaste tree) protein is Class I diterpene synthase TPS6, chloroplastic.